We begin with the raw amino-acid sequence, 399 residues long: Tryptophan synthase beta chain (399 aa).

Residue lysine 90 is modified to N6-(pyridoxal phosphate)lysine.

It belongs to the TrpB family. Tetramer of two alpha and two beta chains. Requires pyridoxal 5'-phosphate as cofactor.

It catalyses the reaction (1S,2R)-1-C-(indol-3-yl)glycerol 3-phosphate + L-serine = D-glyceraldehyde 3-phosphate + L-tryptophan + H2O. It functions in the pathway amino-acid biosynthesis; L-tryptophan biosynthesis; L-tryptophan from chorismate: step 5/5. The beta subunit is responsible for the synthesis of L-tryptophan from indole and L-serine. This is Tryptophan synthase beta chain from Bacillus pumilus (strain SAFR-032).